Here is a 210-residue protein sequence, read N- to C-terminus: Na(+)-translocating NADH-quinone reductase subunit D (210 aa).

The next 6 helical transmembrane spans lie at I10–S30, F42–I62, I72–A92, V103–M123, F131–F151, and N178–I198.

The protein belongs to the NqrDE/RnfAE family. As to quaternary structure, composed of six subunits; NqrA, NqrB, NqrC, NqrD, NqrE and NqrF.

The protein localises to the cell inner membrane. The catalysed reaction is a ubiquinone + n Na(+)(in) + NADH + H(+) = a ubiquinol + n Na(+)(out) + NAD(+). Its function is as follows. NQR complex catalyzes the reduction of ubiquinone-1 to ubiquinol by two successive reactions, coupled with the transport of Na(+) ions from the cytoplasm to the periplasm. NqrA to NqrE are probably involved in the second step, the conversion of ubisemiquinone to ubiquinol. This chain is Na(+)-translocating NADH-quinone reductase subunit D, found in Photobacterium profundum (strain SS9).